We begin with the raw amino-acid sequence, 481 residues long: MQWEVVIGLEIHTQLTTQSKIFSGSSTAFGAEPNTQASLIDLGMPGVLPVLNQEAVRMAVMFGLAVDAEIGQHNVFARKNYFYPDLPKGYQISQMELPIVGKGHLDIPLEDGTMKRVGITRAHLEEDAGKSLHEEFNGATGIDLNRAGTPLLEIVSEPDMRSAKEAVAYVKSIHALVRYLGICDGNMAEGSLRCDCNVSIRPKGQVEFGTRCEIKNVNSFRFIEKAINSEIRRQIELIEDGGKVIQQTRLYDPNKDETRPMRSKEEANDYRYFPDPDLLPVVIEDSFLDQVRATLPELPPQKRERFQEQFGLSVYDASVLATSREQADYFEKVASIAGDAKLAANWVMVELGSLLNKQGLEIDEAPVSAEQLGGMLLRIKDNTISGKIAKTVFEAMANGEGNADEIIDKRGLKQVTDSGAISAVLDEMLAANAEQVEQYRAADEAKRGKMFGFFVGQAMKASKGKANPQQVNELLKSKLEG.

The protein belongs to the GatB/GatE family. GatB subfamily. As to quaternary structure, heterotrimer of A, B and C subunits.

It catalyses the reaction L-glutamyl-tRNA(Gln) + L-glutamine + ATP + H2O = L-glutaminyl-tRNA(Gln) + L-glutamate + ADP + phosphate + H(+). The enzyme catalyses L-aspartyl-tRNA(Asn) + L-glutamine + ATP + H2O = L-asparaginyl-tRNA(Asn) + L-glutamate + ADP + phosphate + 2 H(+). Allows the formation of correctly charged Asn-tRNA(Asn) or Gln-tRNA(Gln) through the transamidation of misacylated Asp-tRNA(Asn) or Glu-tRNA(Gln) in organisms which lack either or both of asparaginyl-tRNA or glutaminyl-tRNA synthetases. The reaction takes place in the presence of glutamine and ATP through an activated phospho-Asp-tRNA(Asn) or phospho-Glu-tRNA(Gln). The sequence is that of Aspartyl/glutamyl-tRNA(Asn/Gln) amidotransferase subunit B from Pseudomonas fluorescens (strain ATCC BAA-477 / NRRL B-23932 / Pf-5).